We begin with the raw amino-acid sequence, 156 residues long: Aspartate carbamoyltransferase regulatory chain (156 aa).

Residues cysteine 107, cysteine 112, cysteine 137, and cysteine 140 each coordinate Zn(2+).

This sequence belongs to the PyrI family. As to quaternary structure, contains catalytic and regulatory chains. Zn(2+) is required as a cofactor.

Functionally, involved in allosteric regulation of aspartate carbamoyltransferase. The polypeptide is Aspartate carbamoyltransferase regulatory chain (Methanopyrus kandleri (strain AV19 / DSM 6324 / JCM 9639 / NBRC 100938)).